The primary structure comprises 1218 residues: Probable cation-transporting ATPase 13A5 (1218 aa).

Transmembrane regions (helical) follow at residues 33–53 (KAFCLVASVLTCGGLLLVFYW), 222–242 (GYIEYSVAIIILTVISIVLSV), 401–421 (FIVFLACLGVMGFFYALGVYM), and 433–453 (MALILLTVTVPPVLPAALTIG). The active-site 4-aspartylphosphate intermediate is Asp486. N-linked (GlcNAc...) asparagine glycans are attached at residues Asn540, Asn669, and Asn819. Residues Asp850 and Asp854 each coordinate Mg(2+). Helical transmembrane passes span 903-923 (FGVFKYLTMYGIIQFISALLL), 940-956 (VAITLMVCLTMSSTHAY), 973-993 (LLLSIFLNSCFSCIVQISAFL), 1042-1062 (FETTTLWPITTINYITVAFIF), 1077-1097 (IFSFLLLAALGLTIFILFSDF), and 1115-1135 (VLILVVALTQFCVAFFVEDSI).

The protein belongs to the cation transport ATPase (P-type) (TC 3.A.3) family. Type V subfamily.

The protein localises to the membrane. It carries out the reaction ATP + H2O = ADP + phosphate + H(+). The protein is Probable cation-transporting ATPase 13A5 (ATP13A5) of Homo sapiens (Human).